Reading from the N-terminus, the 860-residue chain is Protein argonaute-2 (860 aa).

Residues 1-30 (MYSGAGPALAPPAPPPPPIQGYAFKPPPRP) form a disordered region. 3'-nitrotyrosine is present on Tyr-2. Residues 9 to 30 (LAPPAPPPPPIQGYAFKPPPRP) are compositionally biased toward pro residues. In terms of domain architecture, PAZ spans 230–349 (PVIEFVCEVL…LPLEVCNIVA (120 aa)). Residues 312 to 317 (YFKDRH) form an interaction with guide RNA region. At Ser-388 the chain carries Phosphoserine. Residues 518-819 (LVVVILPGKT…VAFRARYHLV (302 aa)) enclose the Piwi domain. The interval 525–567 (GKTPVYAEVKRVGDTVLGMATQCVQMKNVQRTTPQTLSNLWLK) is interaction with guide RNA. An interaction with GW182 family members region spans residues 588–591 (FQQP). A divalent metal cation is bound at residue Asp-598. The interaction with GW182 family members stretch occupies residues 651–661 (LIQFYKSTRFK). Asp-670 is an a divalent metal cation binding site. Pro-701 carries the post-translational modification 4-hydroxyproline. Interaction with guide RNA regions lie at residues 710 to 711 (KR), 754 to 762 (HAGIQGTSR), and 791 to 813 (YVRC…VAFR). His-808 contributes to the a divalent metal cation binding site. A phosphoserine mark is found at Ser-825, Ser-829, Ser-832, and Ser-835.

This sequence belongs to the argonaute family. Ago subfamily. In terms of assembly, interacts with DICER1 through its Piwi domain and with TARBP2 during assembly of the RNA-induced silencing complex (RISC). Together, DICER1, AGO2 and TARBP2 constitute the trimeric RISC loading complex (RLC), or micro-RNA (miRNA) loading complex (miRLC). Within the RLC/miRLC, DICER1 and TARBP2 are required to process precursor miRNAs (pre-miRNAs) to mature miRNAs and then load them onto AGO2. AGO2 bound to the mature miRNA constitutes the minimal RISC and may subsequently dissociate from DICER1 and TARBP2. Note however that the term RISC has also been used to describe the trimeric RLC/miRLC. The formation of RISC complexes containing siRNAs rather than miRNAs appears to occur independently of DICER1. Interacts with AGO1. Also interacts with DDB1, DDX5, DDX6, DDX20, DHX30, DHX36, DDX47, DHX9, ELAVL, FXR1, GEMIN4, HNRNPF, IGF2BP1, ILF3, IMP8, MATR3, PABPC1, PRMT5, P4HA1, P4HB, RBM4, SART3, TNRC6A, TNRC6B, UPF1 and YBX1. Interacts with the P-body components DCP1A and XRN1. Associates with polysomes and messenger ribonucleoproteins (mNRPs). Interacts with RBM4; the interaction is modulated under stress-induced conditions, occurs under both cell proliferation and differentiation conditions and in an RNA- and phosphorylation-independent manner. Interacts with LIMD1, WTIP and AJUBA. Interacts with TRIM71; the interaction increases in presence of RNA. Interacts with APOBEC3G in an RNA-dependent manner. Interacts with APOBEC3A, APOBEC3C, APOBEC3F and APOBEC3H. Interacts with DICER1, TARBP2, EIF6, MOV10 and RPL7A (60S ribosome subunit); they form a large RNA-induced silencing complex (RISC). Interacts with FMR1. Interacts with ZFP36. Interacts with RC3H1; the interaction is RNA independent. Found in a complex composed of AGO2, CHD7 and ARB2A. Interacts with SND1 and SYT11. Interacts with CLNK. Interacts with GARRE1. Interacts with GRB2; this interaction is important for the formation of a ternary complex containing GRB2, AGO2 and DICER1. The cofactor is Mg(2+). Mn(2+) serves as cofactor. Post-translationally, hydroxylated. 4-hydroxylation appears to enhance protein stability but is not required for miRNA-binding or endonuclease activity. Ubiquitinated on surface-exposed lysines by a SCF-like E3 ubiquitin-protein ligase complex containing ZSWIM8 during target-directed microRNA degradation (TDMD), a process that mediates degradation of microRNAs (miRNAs). Ubiquitination by the SCF-like E3 ubiquitin-protein ligase complex containing ZSWIM8 leads to its subsequent degradation, thereby exposing miRNAs for degradation. ZSWIM8 recognizes and binds AGO2 when it is engaged with a TDMD target. In terms of processing, phosphorylation at Ser-388 by AKT3; leads to up-regulate translational repression of microRNA target and down-regulate endonucleolytic cleavage. Post-translationally, a phosphorylation cycle of C-terminal serine cluster (Ser-825-Ser-835) regulates the release of target mRNAs. Target-binding leads to phosphorylation of these residues by CSNK1A1, which reduces the affinity of AGO2 for mRNA and enables target release. The ANKRD52-PPP6C phosphatase complex dephosphorylates the residues, which primes AGO2 for binding a new target.

It is found in the cytoplasm. The protein resides in the P-body. The protein localises to the nucleus. It carries out the reaction Endonucleolytic cleavage to 5'-phosphomonoester.. In terms of biological role, required for RNA-mediated gene silencing (RNAi) by the RNA-induced silencing complex (RISC). The 'minimal RISC' appears to include AGO2 bound to a short guide RNA such as a microRNA (miRNA) or short interfering RNA (siRNA). These guide RNAs direct RISC to complementary mRNAs that are targets for RISC-mediated gene silencing. The precise mechanism of gene silencing depends on the degree of complementarity between the miRNA or siRNA and its target. Binding of RISC to a perfectly complementary mRNA generally results in silencing due to endonucleolytic cleavage of the mRNA specifically by AGO2. Binding of RISC to a partially complementary mRNA results in silencing through inhibition of translation, and this is independent of endonuclease activity. May inhibit translation initiation by binding to the 7-methylguanosine cap, thereby preventing the recruitment of the translation initiation factor eIF4-E. May also inhibit translation initiation via interaction with EIF6, which itself binds to the 60S ribosomal subunit and prevents its association with the 40S ribosomal subunit. The inhibition of translational initiation leads to the accumulation of the affected mRNA in cytoplasmic processing bodies (P-bodies), where mRNA degradation may subsequently occur. In some cases RISC-mediated translational repression is also observed for miRNAs that perfectly match the 3' untranslated region (3'-UTR). Can also up-regulate the translation of specific mRNAs under certain growth conditions. Binds to the AU element of the 3'-UTR of the TNF (TNF-alpha) mRNA and up-regulates translation under conditions of serum starvation. Also required for transcriptional gene silencing (TGS), in which short RNAs known as antigene RNAs or agRNAs direct the transcriptional repression of complementary promoter regions. The polypeptide is Protein argonaute-2 (AGO2) (Bos taurus (Bovine)).